Consider the following 513-residue polypeptide: Alanine--glyoxylate aminotransferase 2, mitochondrial (513 aa).

A mitochondrion-targeting transit peptide spans 1 to 40 (MSLAWRNLQKPFYLETSLRILQMRPSLSLGASRIAVPKLT). Position 56 is an N6-acetyllysine (Lys56). Lys70 bears the N6-acetyllysine; alternate mark. At Lys70 the chain carries N6-succinyllysine; alternate. Residue Lys83 is modified to N6-acetyllysine. Lys261 carries the N6-acetyllysine; alternate modification. At Lys261 the chain carries N6-succinyllysine; alternate. N6-succinyllysine is present on Lys303. The residue at position 349 (Lys349) is an N6-(pyridoxal phosphate)lysine. An N6-acetyllysine; alternate mark is found at Lys416 and Lys419. N6-succinyllysine; alternate is present on residues Lys416 and Lys419. The residue at position 453 (Lys453) is an N6-acetyllysine.

It belongs to the class-III pyridoxal-phosphate-dependent aminotransferase family. As to quaternary structure, homotetramer. It depends on pyridoxal 5'-phosphate as a cofactor. In terms of tissue distribution, expressed in the liver and kidney.

It is found in the mitochondrion. It catalyses the reaction glyoxylate + L-alanine = glycine + pyruvate. The catalysed reaction is (R)-3-amino-2-methylpropanoate + pyruvate = 2-methyl-3-oxopropanoate + L-alanine. The enzyme catalyses 3-oxopropanoate + L-alanine = beta-alanine + pyruvate. It carries out the reaction 2-oxobutanoate + L-alanine = (2S)-2-aminobutanoate + pyruvate. It catalyses the reaction N(omega),N(omega)-dimethyl-L-arginine + pyruvate = 5-(3,3-dimethylguanidino)-2-oxopentanoate + L-alanine. The catalysed reaction is N(omega),N('omega)-dimethyl-L-arginine + pyruvate = 5-(3,3'-dimethylguanidino)-2-oxopentanoate + L-alanine. The enzyme catalyses N(omega),N(omega)-dimethyl-L-arginine + glyoxylate = 5-(3,3-dimethylguanidino)-2-oxopentanoate + glycine. It carries out the reaction N(omega),N('omega)-dimethyl-L-arginine + glyoxylate = 5-(3,3'-dimethylguanidino)-2-oxopentanoate + glycine. It catalyses the reaction N(omega)-methyl-L-arginine + pyruvate = 5-(3-methylguanidino)-2-oxopentanoate + L-alanine. The catalysed reaction is N(omega)-methyl-L-arginine + glyoxylate = 5-(3-methylguanidino)-2-oxopentanoate + glycine. The enzyme catalyses L-ornithine + pyruvate = 5-amino-2-oxopentanoate + L-alanine. It carries out the reaction L-ornithine + glyoxylate = 5-amino-2-oxopentanoate + glycine. It catalyses the reaction (2S)-2-aminobutanoate + glyoxylate = 2-oxobutanoate + glycine. The catalysed reaction is N(omega),N(omega)-dimethyl-L-arginine + oxaloacetate = 5-(3,3-dimethylguanidino)-2-oxopentanoate + L-aspartate. The enzyme catalyses oxaloacetate + L-alanine = L-aspartate + pyruvate. It carries out the reaction N(omega),N(omega)-dimethyl-L-arginine + 2-oxobutanoate = 5-(3,3-dimethylguanidino)-2-oxopentanoate + (2S)-2-aminobutanoate. It catalyses the reaction 2-oxopentanoate + N(omega),N(omega)-dimethyl-L-arginine = 5-(3,3-dimethylguanidino)-2-oxopentanoate + L-2-aminopentanoate. The catalysed reaction is 2-oxohexanoate + N(omega),N(omega)-dimethyl-L-arginine = L-2-aminohexanoate + 5-(3,3-dimethylguanidino)-2-oxopentanoate. Its activity is regulated as follows. (R)-3-amino-2-methylpropionate--pyruvate transaminase and beta-alanine-pyruvate aminotransferase are inhibited by aminooxyacetic acid. Multifunctional aminotransferase with a broad substrate specificity. Catalyzes the conversion of glyoxylate to glycine using alanine as the amino donor. Catalyzes metabolism of not L- but the D-isomer of D-beta-aminoisobutyric acid to generate 2-methyl-3-oxopropanoate and alanine. Catalyzes the transfer of the amino group from beta-alanine to pyruvate to yield L-alanine and 3-oxopropanoate. Can metabolize NG-monomethyl-L-arginine (NMMA), asymmetric NG,NG-dimethyl-L-arginine (ADMA) and symmetric NG,N'G-dimethyl-L-arginine (SDMA). ADMA is a potent inhibitor of nitric-oxide (NO) synthase, and this activity provides mechanism through which the kidney regulates blood pressure. The protein is Alanine--glyoxylate aminotransferase 2, mitochondrial (Agxt2) of Mus musculus (Mouse).